A 94-amino-acid chain; its full sequence is Cystatin-A3 (94 aa).

Positions glutamine 46–glycine 50 match the Secondary area of contact motif.

This sequence belongs to the cystatin family.

The protein localises to the cytoplasm. In terms of biological role, intracellular thiol proteinase inhibitor. In Dictyostelium discoideum (Social amoeba), this protein is Cystatin-A3 (cpiC).